The sequence spans 185 residues: Transcription antitermination protein NusB (185 aa).

This sequence belongs to the NusB family.

In terms of biological role, involved in transcription antitermination. Required for transcription of ribosomal RNA (rRNA) genes. Binds specifically to the boxA antiterminator sequence of the ribosomal RNA (rrn) operons. This Rhodospirillum rubrum (strain ATCC 11170 / ATH 1.1.1 / DSM 467 / LMG 4362 / NCIMB 8255 / S1) protein is Transcription antitermination protein NusB.